The following is a 340-amino-acid chain: Ferrochelatase (340 aa).

2 residues coordinate Fe cation: H189 and E292.

It belongs to the ferrochelatase family.

It localises to the cytoplasm. The enzyme catalyses heme b + 2 H(+) = protoporphyrin IX + Fe(2+). It participates in porphyrin-containing compound metabolism; protoheme biosynthesis; protoheme from protoporphyrin-IX: step 1/1. Functionally, catalyzes the ferrous insertion into protoporphyrin IX. This chain is Ferrochelatase, found in Pseudomonas fluorescens (strain ATCC BAA-477 / NRRL B-23932 / Pf-5).